The chain runs to 139 residues: Drosulfakinins (139 aa).

The first 35 residues, Met1 to Thr35, serve as a signal peptide directing secretion. The propeptide occupies Ala36–Ser71. At Phe80 the chain carries Phenylalanine amide. Positions Gly81–Ser109 are excised as a propeptide. Tyr115 is subject to Sulfotyrosine. A Phenylalanine amide modification is found at Phe120. Residue Tyr132 is modified to Sulfotyrosine. Phe137 is modified (phenylalanine amide).

This sequence belongs to the gastrin/cholecystokinin family.

The protein localises to the secreted. Functionally, drosulfakinin-0 (DSK 0) plays diverse biological roles including regulating gut muscle contraction in adults but not in larvae. This is Drosulfakinins from Drosophila pseudoobscura pseudoobscura (Fruit fly).